The chain runs to 282 residues: Protein canopy homolog 3 (282 aa).

The signal sequence occupies residues 1–33 (MEPLPEPASGPRPRPHRLLLLSLLLLLLPLLPA). Residues 53-275 (SKCEVCKYVA…EGIQKASPLT (223 aa)) form the Saposin B-type domain. Intrachain disulfides connect cysteine 55–cysteine 212, cysteine 58–cysteine 200, and cysteine 110–cysteine 172. Asparagine 159 is a glycosylation site (N-linked (GlcNAc...) asparagine). The stretch at 159-185 (NETSAEVADLKKQCDVLVEEFEEVIED) forms a coiled coil. The tract at residues 221-282 (KGDTAALGGK…PLTHSPPDEL (62 aa)) is disordered. Over residues 255–266 (DLDGDPSPEEDE) the composition is skewed to acidic residues.

It belongs to the canopy family. In terms of assembly, interacts with HSP90B1; this interaction is disrupted in the presence of ATP. Interacts with TLR1, TLR2, TLR4 and TLR9.

The protein resides in the endoplasmic reticulum. Its function is as follows. Toll-like receptor (TLR)-specific co-chaperone for HSP90B1. Required for proper TLR folding, except that of TLR3, and hence controls TLR exit from the endoplasmic reticulum. Consequently, required for both innate and adaptive immune responses. This Bos taurus (Bovine) protein is Protein canopy homolog 3 (CNPY3).